Consider the following 434-residue polypeptide: Probable tRNA pseudouridine synthase D (434 aa).

The active-site Nucleophile is the aspartate 93. Residues 169 to 396 (GTPNYFGQQR…SAGSRRAILL (228 aa)) enclose the TRUD domain.

This sequence belongs to the pseudouridine synthase TruD family.

It carries out the reaction uridine(13) in tRNA = pseudouridine(13) in tRNA. In terms of biological role, could be responsible for synthesis of pseudouridine from uracil-13 in transfer RNAs. This chain is Probable tRNA pseudouridine synthase D, found in Halobacterium salinarum (strain ATCC 29341 / DSM 671 / R1).